Reading from the N-terminus, the 552-residue chain is DNA ligase (552 aa).

Position 244 (E244) interacts with ATP. The active-site N6-AMP-lysine intermediate is K246. 6 residues coordinate ATP: R251, R266, E296, F336, R408, and K414.

Belongs to the ATP-dependent DNA ligase family. It depends on Mg(2+) as a cofactor.

It catalyses the reaction ATP + (deoxyribonucleotide)n-3'-hydroxyl + 5'-phospho-(deoxyribonucleotide)m = (deoxyribonucleotide)n+m + AMP + diphosphate.. In terms of biological role, DNA ligase that seals nicks in double-stranded DNA during DNA replication, DNA recombination and DNA repair. The chain is DNA ligase from Methanothrix thermoacetophila (strain DSM 6194 / JCM 14653 / NBRC 101360 / PT) (Methanosaeta thermophila).